Here is a 418-residue protein sequence, read N- to C-terminus: Putative L-glutamine:3-amino-2,3-dideoxy-scyllo-inosose aminotransferase (418 aa).

Lys-199 bears the N6-(pyridoxal phosphate)lysine mark.

It belongs to the DegT/DnrJ/EryC1 family. L-glutamine:2-deoxy-scyllo-inosose/scyllo-inosose aminotransferase subfamily. Requires pyridoxal 5'-phosphate as cofactor.

The catalysed reaction is 3-amino-2,3-dideoxy-scyllo-inosose + L-glutamine = 2-deoxystreptamine + 2-oxoglutaramate. The protein operates within metabolic intermediate biosynthesis; 2-deoxystreptamine biosynthesis; 2-deoxystreptamine from D-glucose 6-phosphate: step 4/4. It functions in the pathway antibiotic biosynthesis; gentamicin biosynthesis. Its function is as follows. Catalyzes the transamination of 3-amino-2,3-dideoxy-scyllo-inosose (amino-DOI) into 2-deoxystreptamine (DOS). This is Putative L-glutamine:3-amino-2,3-dideoxy-scyllo-inosose aminotransferase (gtmD) from Micromonospora echinospora (Micromonospora purpurea).